Consider the following 473-residue polypeptide: ATP synthase subunit beta (473 aa).

158 to 165 (GGAGVGKT) contacts ATP.

The protein belongs to the ATPase alpha/beta chains family. In terms of assembly, F-type ATPases have 2 components, CF(1) - the catalytic core - and CF(0) - the membrane proton channel. CF(1) has five subunits: alpha(3), beta(3), gamma(1), delta(1), epsilon(1). CF(0) has three main subunits: a(1), b(2) and c(9-12). The alpha and beta chains form an alternating ring which encloses part of the gamma chain. CF(1) is attached to CF(0) by a central stalk formed by the gamma and epsilon chains, while a peripheral stalk is formed by the delta and b chains.

Its subcellular location is the cell membrane. The enzyme catalyses ATP + H2O + 4 H(+)(in) = ADP + phosphate + 5 H(+)(out). Functionally, produces ATP from ADP in the presence of a proton gradient across the membrane. The catalytic sites are hosted primarily by the beta subunits. The sequence is that of ATP synthase subunit beta from Bacillus pumilus (strain SAFR-032).